The sequence spans 152 residues: Transcriptional regulator MraZ (152 aa).

2 SpoVT-AbrB domains span residues Ala-5–Glu-52 and Ala-81–Ala-124.

Belongs to the MraZ family. Forms oligomers.

It is found in the cytoplasm. The protein localises to the nucleoid. The sequence is that of Transcriptional regulator MraZ from Shewanella woodyi (strain ATCC 51908 / MS32).